A 121-amino-acid polypeptide reads, in one-letter code: Large ribosomal subunit protein bL20 (121 aa).

It belongs to the bacterial ribosomal protein bL20 family.

Functionally, binds directly to 23S ribosomal RNA and is necessary for the in vitro assembly process of the 50S ribosomal subunit. It is not involved in the protein synthesizing functions of that subunit. This is Large ribosomal subunit protein bL20 from Mycoplasma mycoides subsp. mycoides SC (strain CCUG 32753 / NCTC 10114 / PG1).